The sequence spans 333 residues: MGKNITVLGAGAWGTAFGQVLADAGNTVTMWAKEQQIVEGIRDHHHNAVRLPSVEKLPDNMTATGDRAEAVKNADIVVVAIAAQFARVALVEFKGLIPDHAIVVSLMKGIERGTNKRMDEVVRESLDLPADRFAAISGPNLSKEIADRHPAATVVACTNLDNATKVAEACTTSYFKPFVTTDVIGLEMCGSLKNVTALAVGMARGAGYGENTAAMIETRGLAELTALGVAAGADPKTFFGLAGVGDLIATCGSSLSRNYTFGANLGKGLTVEEATKVSNGVAEGVPTTDAVVALGDQLDVPTPLAYQMSRVLNEGISCSEMLAGLFGHEVTGE.

NADPH contacts are provided by tryptophan 13, lysine 33, and lysine 108. Sn-glycerol 3-phosphate contacts are provided by lysine 108 and glycine 138. Serine 142 serves as a coordination point for NADPH. Residues lysine 193, aspartate 246, serine 256, arginine 257, and asparagine 258 each contribute to the sn-glycerol 3-phosphate site. Catalysis depends on lysine 193, which acts as the Proton acceptor. Residue arginine 257 participates in NADPH binding. The NADPH site is built by valine 281 and glutamate 283.

Belongs to the NAD-dependent glycerol-3-phosphate dehydrogenase family.

Its subcellular location is the cytoplasm. It carries out the reaction sn-glycerol 3-phosphate + NAD(+) = dihydroxyacetone phosphate + NADH + H(+). It catalyses the reaction sn-glycerol 3-phosphate + NADP(+) = dihydroxyacetone phosphate + NADPH + H(+). It participates in membrane lipid metabolism; glycerophospholipid metabolism. Catalyzes the reduction of the glycolytic intermediate dihydroxyacetone phosphate (DHAP) to sn-glycerol 3-phosphate (G3P), the key precursor for phospholipid synthesis. This is Glycerol-3-phosphate dehydrogenase [NAD(P)+] from Bifidobacterium longum (strain NCC 2705).